The following is a 321-amino-acid chain: Degreening-related gene dee76 protein (321 aa).

This sequence belongs to the Mo25 family.

This Auxenochlorella protothecoides (Green microalga) protein is Degreening-related gene dee76 protein (DEE76).